The sequence spans 141 residues: Hemoglobin subunit alpha (141 aa).

In terms of domain architecture, Globin spans 1 to 141; that stretch reads VLSSDDKCNV…VSSVLTSKYR (141 aa). His58 contributes to the O2 binding site. Residue His87 participates in heme b binding.

The protein belongs to the globin family. In terms of assembly, heterotetramer of two alpha chains and two beta chains. In terms of tissue distribution, red blood cells.

Involved in oxygen transport from the lung to the various peripheral tissues. This is Hemoglobin subunit alpha (HBA) from Crocodylus niloticus (Nile crocodile).